A 1393-amino-acid polypeptide reads, in one-letter code: DNA-directed RNA polymerase subunit beta' (1393 aa).

Zn(2+) contacts are provided by Cys70, Cys72, Cys85, and Cys88. Mg(2+) is bound by residues Asp461, Asp463, and Asp465. Zn(2+) contacts are provided by Cys815, Cys889, Cys896, and Cys899.

The protein belongs to the RNA polymerase beta' chain family. In terms of assembly, the RNAP catalytic core consists of 2 alpha, 1 beta, 1 beta' and 1 omega subunit. When a sigma factor is associated with the core the holoenzyme is formed, which can initiate transcription. Requires Mg(2+) as cofactor. It depends on Zn(2+) as a cofactor.

The enzyme catalyses RNA(n) + a ribonucleoside 5'-triphosphate = RNA(n+1) + diphosphate. In terms of biological role, DNA-dependent RNA polymerase catalyzes the transcription of DNA into RNA using the four ribonucleoside triphosphates as substrates. The chain is DNA-directed RNA polymerase subunit beta' from Vesicomyosocius okutanii subsp. Calyptogena okutanii (strain HA).